The following is a 216-amino-acid chain: Small ribosomal subunit protein uS3 (216 aa).

The KH type-2 domain maps to 39–111; it reads IYKFFDKLVR…DINLQVSLLK (73 aa).

The protein belongs to the universal ribosomal protein uS3 family. Part of the 30S ribosomal subunit. Forms a tight complex with proteins S10 and S14.

Functionally, binds the lower part of the 30S subunit head. Binds mRNA in the 70S ribosome, positioning it for translation. This chain is Small ribosomal subunit protein uS3, found in Mycoplasmopsis agalactiae (strain NCTC 10123 / CIP 59.7 / PG2) (Mycoplasma agalactiae).